Reading from the N-terminus, the 324-residue chain is Calmodulin-like protein 12 (324 aa).

6 consecutive EF-hand domains span residues 8 to 43 (DQIT…IGEK), 44 to 79 (PTKA…NQGH), 97 to 132 (DQIT…LGKN), 133 to 168 (RTKA…NQGH), 187 to 222 (DQIL…LGET), and 223 to 258 (QTKA…KMID). Ca(2+)-binding residues include Asp21, Asn23, Asp25, Ser27, Glu32, Asp57, Asp59, Asp61, Thr63, Glu68, Asp110, Asn112, Asp114, Ser116, Glu121, Asp146, Asp148, Asp150, Thr152, Glu157, Asp200, Asn202, Asp204, Tyr206, Glu211, Asp236, Asp238, Asp240, Thr242, and Glu247.

It belongs to the calmodulin family. In terms of assembly, interacts with PID. Binds to ABCG36.

Its function is as follows. Potential calcium sensor that binds calcium in vitro. The chain is Calmodulin-like protein 12 from Arabidopsis thaliana (Mouse-ear cress).